Here is a 430-residue protein sequence, read N- to C-terminus: GTPase Obg (430 aa).

In terms of domain architecture, Obg spans 1 to 158 (MFIDKAKIYL…LTVVLELKLI (158 aa)). One can recognise an OBG-type G domain in the interval 159-330 (ADVGLVGFPN…LLSYVSKRLK (172 aa)). GTP-binding positions include 165–172 (GFPNVGKS), 190–194 (FTTLT), 212–215 (DIPG), 282–285 (NKTD), and 311–313 (SAA). Residues serine 172 and threonine 192 each contribute to the Mg(2+) site. One can recognise an OCT domain in the interval 351–430 (KYEETEDKYH…MYSVEFEYFN (80 aa)).

Belongs to the TRAFAC class OBG-HflX-like GTPase superfamily. OBG GTPase family. In terms of assembly, monomer. The cofactor is Mg(2+).

The protein resides in the cytoplasm. In terms of biological role, an essential GTPase which binds GTP, GDP and possibly (p)ppGpp with moderate affinity, with high nucleotide exchange rates and a fairly low GTP hydrolysis rate. Plays a role in control of the cell cycle, stress response, ribosome biogenesis and in those bacteria that undergo differentiation, in morphogenesis control. This Alkaliphilus oremlandii (strain OhILAs) (Clostridium oremlandii (strain OhILAs)) protein is GTPase Obg.